The following is a 322-amino-acid chain: MSADKFRDSTHYRDWIFTEEDLSKTRAKVNEKFTNIVRERMLEELSLQNKEASLEVLPPTLTVEEELELVNYYSFQLNALSSALSLPTHIRSTAILFFKRFYLINSVMEYSPKIISFTSLFLATKCNDHYISIEQFCKNMPKTTPEEVLEYEFNVCQSLKWDLYVWLPFRPLQGFLLDCQTVLPKVAVEKFYECHDLSKKFLIETLHSDIYFLHSPSIIALGAIYHTNPTICLQYIEAKKIPELQPLIISISANLKATKKFKIEKKKAQDYGRKLYFCMNPLRNKSSALYLKRKAEEESTNNNKWAKKFSTSSNVLDKNPFE.

Phosphoserine is present on Ser-310.

This sequence belongs to the cyclin family. Cyclin C subfamily. One of the nine subunits forming the core-TFIIH basal transcription factor. Interacts with crk1 and skp1.

It is found in the nucleus. In terms of biological role, essential for progression through the cell cycle. Possesses kinase activity that can be detected when myelin basic protein (MBP) is provided as an exogenous substrate. The protein is Cyclin mcs2 (mcs2) of Schizosaccharomyces pombe (strain 972 / ATCC 24843) (Fission yeast).